We begin with the raw amino-acid sequence, 474 residues long: Ankyrin repeat, SAM and basic leucine zipper domain-containing protein 1 (474 aa).

The disordered stretch occupies residues 1 to 31; that stretch reads MAGRLRGPAVPGGGESSDSDEDGWDIGYTER. A phosphoserine mark is found at serine 16, serine 17, and serine 19. 6 ANK repeats span residues 43 to 72, 76 to 105, 108 to 142, 146 to 175, 179 to 208, and 212 to 241; these read EKDE…QVDS, FGWT…NASF, DQHT…SPNA, KRMS…EINA, NGYT…DKTL, and DGKT…PLHG. An SAM domain is found at 270–333; the sequence is SYSAFGDLEI…KIMDAVEELQ (64 aa).

Interacts with DDX4, PIWIL1, RANBP9 and TDRD1.

Its subcellular location is the cytoplasm. In terms of biological role, plays a central role during spermatogenesis by repressing transposable elements and preventing their mobilization, which is essential for the germline integrity. Acts via the piRNA metabolic process, which mediates the repression of transposable elements during meiosis by forming complexes composed of piRNAs and Piwi proteins and governs the methylation and subsequent repression of transposons. Its association with pi-bodies suggests a participation in the primary piRNAs metabolic process. Required prior to the pachytene stage to facilitate the production of multiple types of piRNAs, including those associated with repeats involved in the regulation of retrotransposons. May act by mediating protein-protein interactions during germ cell maturation. This chain is Ankyrin repeat, SAM and basic leucine zipper domain-containing protein 1 (ASZ1), found in Ornithorhynchus anatinus (Duckbill platypus).